Reading from the N-terminus, the 239-residue chain is Protein GrpE (239 aa).

Disordered stretches follow at residues Met1 to Asp60 and Ser208 to Val239. Polar residues predominate over residues Ser28–Gln42. Composition is skewed to basic and acidic residues over residues Lys43–Lys53 and Ser216–Val225. Residues Glu226 to Val239 are compositionally biased toward acidic residues.

It belongs to the GrpE family. As to quaternary structure, homodimer.

Its subcellular location is the cytoplasm. In terms of biological role, participates actively in the response to hyperosmotic and heat shock by preventing the aggregation of stress-denatured proteins, in association with DnaK and GrpE. It is the nucleotide exchange factor for DnaK and may function as a thermosensor. Unfolded proteins bind initially to DnaJ; upon interaction with the DnaJ-bound protein, DnaK hydrolyzes its bound ATP, resulting in the formation of a stable complex. GrpE releases ADP from DnaK; ATP binding to DnaK triggers the release of the substrate protein, thus completing the reaction cycle. Several rounds of ATP-dependent interactions between DnaJ, DnaK and GrpE are required for fully efficient folding. The chain is Protein GrpE from Prochlorococcus marinus (strain MIT 9301).